A 374-amino-acid polypeptide reads, in one-letter code: 4-hydroxy-3-methylbut-2-en-1-yl diphosphate synthase (flavodoxin) (374 aa).

Residues C272, C275, C307, and E314 each contribute to the [4Fe-4S] cluster site.

The protein belongs to the IspG family. It depends on [4Fe-4S] cluster as a cofactor.

The catalysed reaction is (2E)-4-hydroxy-3-methylbut-2-enyl diphosphate + oxidized [flavodoxin] + H2O + 2 H(+) = 2-C-methyl-D-erythritol 2,4-cyclic diphosphate + reduced [flavodoxin]. Its pathway is isoprenoid biosynthesis; isopentenyl diphosphate biosynthesis via DXP pathway; isopentenyl diphosphate from 1-deoxy-D-xylulose 5-phosphate: step 5/6. Its function is as follows. Converts 2C-methyl-D-erythritol 2,4-cyclodiphosphate (ME-2,4cPP) into 1-hydroxy-2-methyl-2-(E)-butenyl 4-diphosphate. In Acidiphilium cryptum (strain JF-5), this protein is 4-hydroxy-3-methylbut-2-en-1-yl diphosphate synthase (flavodoxin).